A 61-amino-acid chain; its full sequence is Double gene block protein 2 (61 aa).

Topologically, residues 1 to 12 are cytoplasmic; it reads MACCRCDSSPGD. A helical; Signal-anchor for type II membrane protein membrane pass occupies residues 13–33; that stretch reads YSGALLILFISFVFFYITSLS. Topologically, residues 34-61 are lumenal; the sequence is PQGNTYVHHFDSSSVKTQYVGISTNGDG.

It belongs to the gammacarmovirus double gene block protein 2 family.

Its subcellular location is the host endoplasmic reticulum membrane. Its function is as follows. Cell-to-cell movement function. The polypeptide is Double gene block protein 2 (Melon necrotic spot virus (MNSV)).